A 400-amino-acid chain; its full sequence is Probable protein phosphatase 2C 64 (400 aa).

Positions 47-355 constitute a PPM-type phosphatase domain; the sequence is DFSMAVVQAN…DDITVIVVFF (309 aa). Phosphoserine is present on Ser75. Asp86, Gly87, Asp287, and Asp346 together coordinate Mn(2+).

The protein belongs to the PP2C family. In terms of assembly, interacts with SAUR19. Mg(2+) serves as cofactor. The cofactor is Mn(2+).

The enzyme catalyses O-phospho-L-seryl-[protein] + H2O = L-seryl-[protein] + phosphate. It catalyses the reaction O-phospho-L-threonyl-[protein] + H2O = L-threonyl-[protein] + phosphate. Its function is as follows. Dephosphorylates and represses plasma membrane H(+)-ATPases (PM H(+)-ATPases, e.g. AHA1 and AHA2), thus influencing negatively plant growth and fitness. In Arabidopsis thaliana (Mouse-ear cress), this protein is Probable protein phosphatase 2C 64.